The chain runs to 403 residues: Phosphoglycerate kinase (403 aa).

Substrate-binding positions include 22–24 (DLN), Arg37, 60–63 (HLGR), Arg119, and Arg156. Residues Lys206, Gly302, Glu333, and 359–362 (GGDS) contribute to the ATP site.

It belongs to the phosphoglycerate kinase family. In terms of assembly, monomer.

The protein resides in the cytoplasm. The catalysed reaction is (2R)-3-phosphoglycerate + ATP = (2R)-3-phospho-glyceroyl phosphate + ADP. It functions in the pathway carbohydrate degradation; glycolysis; pyruvate from D-glyceraldehyde 3-phosphate: step 2/5. The protein is Phosphoglycerate kinase (pgk) of Streptomyces coelicolor (strain ATCC BAA-471 / A3(2) / M145).